The sequence spans 999 residues: Protein Smaug (999 aa).

Over residues 1-36 (MKYATGTDNAMTSGISGQTNNSNSASNEMQPTTSTP) the composition is skewed to polar residues. Disordered regions lie at residues 1 to 69 (MKYA…QSQP) and 329 to 349 (LCPA…IAPP). Composition is skewed to low complexity over residues 44 to 69 (TSTA…QSQP) and 329 to 338 (LCPASGSRSS). A phosphoserine mark is found at Ser564 and Ser575. The interaction with cup stretch occupies residues 583-763 (EFKPNYIKFH…KDLKFKLSKM (181 aa)). The SAM domain maps to 600–654 (GIGLWLKSLRLHKYIELFKNMTYEEMLLITEDFLQSVGVTKGASHKLALCIDKLK). Disordered stretches follow at residues 773–892 (HVKP…MQQM) and 955–977 (QQSQ…EQQP). Polar residues-rich tracts occupy residues 801 to 822 (KNGS…NFSL) and 854 to 864 (HQPQYKSSSYP). Phosphoserine is present on Ser972.

The protein belongs to the SMAUG family. In terms of assembly, interacts with oskar (osk). Binds to the 3'-UTR of nanos (nos). Interacts with cup, which in turn recruits eIF4-E, leading to an indirect interaction between smg and eIF4-E that prevents mRNA translation. Forms a complex with aub, twin, AGO3, nanos mRNA and piRNAs that targets the nanos 3'-untranslated region, in early embryos. In terms of tissue distribution, at syncytial blastoderm, it is located throughout the bulk cytoplasm and pole plasm. By the time of cellularization, it concentrates at the posterior pole.

It localises to the cytoplasm. Translation regulator that binds to the 3'-UTR of specific mRNAs such as nanos (nos) and prevents their translation. Prevents translation of unlocalized nanos in the bulk cytoplasm via the recruitment of cup. The protein is Protein Smaug (smg) of Drosophila melanogaster (Fruit fly).